The chain runs to 90 residues: uncharacterized protein (90 aa).

2 helical membrane-spanning segments follow: residues 23–43 (ITTIHLLSSIGAINWGLVGLF) and 48–68 (VTLLFGSFPIIVTIFYIIIGF).

It localises to the cell membrane. This is an uncharacterized protein from Rickettsia prowazekii (strain Madrid E).